Reading from the N-terminus, the 119-residue chain is Ribonuclease P protein component (119 aa).

The protein belongs to the RnpA family. In terms of assembly, consists of a catalytic RNA component (M1 or rnpB) and a protein subunit.

The catalysed reaction is Endonucleolytic cleavage of RNA, removing 5'-extranucleotides from tRNA precursor.. In terms of biological role, RNaseP catalyzes the removal of the 5'-leader sequence from pre-tRNA to produce the mature 5'-terminus. It can also cleave other RNA substrates such as 4.5S RNA. The protein component plays an auxiliary but essential role in vivo by binding to the 5'-leader sequence and broadening the substrate specificity of the ribozyme. The sequence is that of Ribonuclease P protein component from Cronobacter sakazakii (strain ATCC BAA-894) (Enterobacter sakazakii).